Here is a 147-residue protein sequence, read N- to C-terminus: Small ribosomal subunit protein uS5 (147 aa).

One can recognise an S5 DRBM domain in the interval 9 to 72 (FEEVIVDIGR…DDAFKNIVEV (64 aa)).

It belongs to the universal ribosomal protein uS5 family. In terms of assembly, part of the 30S ribosomal subunit. Contacts proteins S4 and S8.

In terms of biological role, with S4 and S12 plays an important role in translational accuracy. Located at the back of the 30S subunit body where it stabilizes the conformation of the head with respect to the body. This is Small ribosomal subunit protein uS5 from Campylobacter fetus subsp. fetus (strain 82-40).